A 568-amino-acid chain; its full sequence is Putative ABC transporter ATP-binding protein CPE1583 (568 aa).

ABC transporter domains follow at residues 7-248 (IEFK…GIRE) and 303-536 (LEFK…ASLK). ATP contacts are provided by residues 41-48 (GPSGSGKS) and 336-343 (GKNGAGKS).

It belongs to the ABC transporter superfamily.

The protein resides in the cell membrane. In terms of biological role, probably part of an ABC transporter complex. Responsible for energy coupling to the transport system. In Clostridium perfringens (strain 13 / Type A), this protein is Putative ABC transporter ATP-binding protein CPE1583.